The following is a 192-amino-acid chain: MAQMYFYYSAMNAGKSTTLLQSAFNYQERGMNPLIFTAAIDDRFGVGKVSSRIGLEAEAHLFHADTDLLHVIATLHEAEPRHCILMDECQFLSKEQVYQLTEVVDKLDIPVLCYGLRTDFLGELFEGSKYLLSWADKLIELKTICHCGRKANMVIRTDEHGNAISEGDQVAIGGNDKYVSVCRQHYKEALGR.

ATP-binding positions include 9–16 and 87–90; these read SAMNAGKS and DECQ. Glu88 functions as the Proton acceptor in the catalytic mechanism. 4 residues coordinate Zn(2+): Cys145, Cys147, Cys182, and His185.

This sequence belongs to the thymidine kinase family. As to quaternary structure, homotetramer.

The protein localises to the cytoplasm. The enzyme catalyses thymidine + ATP = dTMP + ADP + H(+). The sequence is that of Thymidine kinase from Vibrio cholerae serotype O1 (strain ATCC 39315 / El Tor Inaba N16961).